Reading from the N-terminus, the 424-residue chain is Tryptophan synthase beta chain (424 aa).

At lysine 108 the chain carries N6-(pyridoxal phosphate)lysine.

Belongs to the TrpB family. In terms of assembly, tetramer of two alpha and two beta chains. The cofactor is pyridoxal 5'-phosphate.

It carries out the reaction (1S,2R)-1-C-(indol-3-yl)glycerol 3-phosphate + L-serine = D-glyceraldehyde 3-phosphate + L-tryptophan + H2O. It functions in the pathway amino-acid biosynthesis; L-tryptophan biosynthesis; L-tryptophan from chorismate: step 5/5. In terms of biological role, the beta subunit is responsible for the synthesis of L-tryptophan from indole and L-serine. This Thermoplasma acidophilum (strain ATCC 25905 / DSM 1728 / JCM 9062 / NBRC 15155 / AMRC-C165) protein is Tryptophan synthase beta chain (trpB).